The sequence spans 281 residues: Ribosomal RNA small subunit methyltransferase I (281 aa).

Belongs to the methyltransferase superfamily. RsmI family.

It localises to the cytoplasm. It carries out the reaction cytidine(1402) in 16S rRNA + S-adenosyl-L-methionine = 2'-O-methylcytidine(1402) in 16S rRNA + S-adenosyl-L-homocysteine + H(+). Its function is as follows. Catalyzes the 2'-O-methylation of the ribose of cytidine 1402 (C1402) in 16S rRNA. The protein is Ribosomal RNA small subunit methyltransferase I of Pasteurella multocida (strain Pm70).